The primary structure comprises 65 residues: UPF0370 protein Ent638_2968 (65 aa).

Residues 4–24 (LSKYWWILVLVFLVGVLLNVI) traverse the membrane as a helical segment. Residues 39 to 65 (KPELPPHRDFNDKWDDDDNWPKKDQKK) are disordered. Basic and acidic residues predominate over residues 42-65 (LPPHRDFNDKWDDDDNWPKKDQKK).

Belongs to the UPF0370 family.

It localises to the cell membrane. The sequence is that of UPF0370 protein Ent638_2968 from Enterobacter sp. (strain 638).